The sequence spans 538 residues: MSIKVYDTTLRDGAQAFGVSFSLEDKIRIAEALDDLGVHYLEGGWPGSNPKDIAFFEAVKGMNFKNLKVAAFSSTRRPDVKIEEDANIQTLIKAETPVYTIFGKSWDLHVEKALRTTLEENLKMIYDTVSYLKRFADEVIYDAEHFFDGYKANREYALKTLKVAEEAGADCLVLADTNGGTLPHEIEEIIEDVKKHVKAPLGIHAHNDSDVAVANTLAAVRKGAVHVQGTINGLGERCGNANLCSVIPNLVLKMGLEVIPKENLKKLFDVAHLVAELSGRPHIENMPYVGDYAFAHKGGVHVSAIKRDPRTYEHIDPELVGNRRIISISELSGKSNVLEKIKEMGFEIDESSPKVREILKKIKELEAQGYHFEGAEASFELLVRDMLGKRKKYFEFLGFTVMTIKNRDEESFSEATVKVRVPDEVAKRLGHDEPFEHTAAEGEGPVEALDRAVRKALEKFYPSLKDTKLTDYKVRILNEQAGTKATTRVLIESSDGKRRWGTVGVSPNIIEASWTALLESLEYKLHKDEEEMRNDEEN.

The 266-residue stretch at 3–268 (IKVYDTTLRD…IPKENLKKLF (266 aa)) folds into the Pyruvate carboxyltransferase domain.

The protein belongs to the alpha-IPM synthase/homocitrate synthase family.

It carries out the reaction pyruvate + acetyl-CoA + H2O = (3R)-citramalate + CoA + H(+). It functions in the pathway amino-acid biosynthesis; L-isoleucine biosynthesis; 2-oxobutanoate from pyruvate: step 1/3. Catalyzes the condensation of pyruvate and acetyl-coenzyme A to form (R)-citramalate. In Thermotoga maritima (strain ATCC 43589 / DSM 3109 / JCM 10099 / NBRC 100826 / MSB8), this protein is (R)-citramalate synthase.